A 562-amino-acid polypeptide reads, in one-letter code: Solute carrier family 22 member 6 (562 aa).

Over 1 to 15 the chain is Cytoplasmic; that stretch reads MPFSELLEQVGSTGR. The chain crosses the membrane as a helical span at residues 16–36; that stretch reads FQVLHVTLLCIPVLMMASHNL. The Extracellular portion of the chain corresponds to 37–147; it reads LQNFVATVPS…LVCDMHSFKQ (111 aa). The helical transmembrane segment at 148–168 threads the bilayer; that stretch reads MGQTIYMGGVLVGALLFGGLS. At 169 to 174 the chain is on the cytoplasmic side; the sequence is DRYGRR. Residues 175-195 traverse the membrane as a helical segment; the sequence is ILLLISNLLMAVSGTCAAFSS. The Extracellular segment spans residues 196 to 205; sequence SFSLFCVFRF. The chain crosses the membrane as a helical span at residues 206 to 226; sequence GCGLALSGLGLNTFSLIVEWI. The Cytoplasmic segment spans residues 227–235; it reads PTRIRTAVG. The chain crosses the membrane as a helical span at residues 236–256; sequence TTTGYCYTLGQLILVLLAYFI. Topologically, residues 257 to 260 are extracellular; sequence RDWR. A helical transmembrane segment spans residues 261–281; sequence WLTLAVSLPFYVFFLIAWWFH. Residues 282–351 lie on the Cytoplasmic side of the membrane; sequence ESSRWLALSN…FNTPAMRKRT (70 aa). Residues 352 to 372 form a helical membrane-spanning segment; the sequence is LCLSAVWLSTSFAYYGLAMDL. Over 373–378 the chain is Extracellular; the sequence is DKFGVD. The chain crosses the membrane as a helical span at residues 379–399; the sequence is IYLIQVIFGAVDIPAKVVVVV. At 400–408 the chain is on the cytoplasmic side; that stretch reads SMSLIGRRR. A helical transmembrane segment spans residues 409–429; it reads SQCAVLVVAGITILLNLLVPY. The Extracellular segment spans residues 430–444; sequence DKQTIRTCLAVLGKG. Residues 445–465 traverse the membrane as a helical segment; the sequence is CLAASFNCCYLYSGELFPTII. Over 466-468 the chain is Cytoplasmic; the sequence is RQN. Residues 469-489 form a helical membrane-spanning segment; that stretch reads GMGWVSMMARIGAMVAPMVLL. Topologically, residues 490–495 are extracellular; sequence TRDYIP. The helical transmembrane segment at 496–516 threads the bilayer; that stretch reads WLPGLIYGGAPILSGLAAIFL. Residues 517–562 are Cytoplasmic-facing; it reads PETLGYPLPDTIQDVEESGSGRKSKMSTKETITLQDKQANLLKQSA.

It belongs to the major facilitator (TC 2.A.1) superfamily. Organic cation transporter (TC 2.A.1.19) family. In terms of processing, glycosylated. Glycosylation is necessary for proper targeting of the transporter to the plasma membrane.

The protein localises to the cell membrane. It is found in the basolateral cell membrane. Its subcellular location is the basal cell membrane. Involved in the renal elimination of endogenous and exogenous organic anions. Functions as organic anion exchanger when the uptake of one molecule of organic anion is coupled with an efflux of one molecule of endogenous dicarboxylic acid (glutarate, ketoglutarate, etc). Mediates the sodium-independent uptake of p-aminohippurate (PAH), 2,3-dimercapto-1-propanesulfonic acid (DMPS), cidofovir, adefovir, 9-(2-phosphonylmethoxyethyl) guanine (PMEG), 9-(2-phosphonylmethoxyethyl) diaminopurine (PMEDAP), ochratoxin (OTA), acyclovir (ACV), 3'-azido-3-'deoxythymidine (AZT), cimetidine (CMD), 2,4-dichloro-phenoxyacetate (2,4-D), hippurate (HA), indoleacetate (IA), indoxyl sulfate (IS), 3-carboxy-4-methyl-5-propyl-2-furanpropionate (CMPF) and edaravone sulfate. Mediates the sodium-independent uptake of p-aminohippurate (PAH). PAH uptake is inhibited by p-chloromercuribenzenesulphonate (PCMBS), diethyl pyrocarbonate (DEPC), indomethacin, sulindac, diclofenac, carprofen, okadaic acid, benzothiazolylcysteine (BTC), S-chlorotrifluoroethylcysteine (CTFC), cysteine S-conjugates S-dichlorovinylcysteine (DCVC), furosemide, steviol, phorbol 12-myristate 13-acetate (PMA), calcium ionophore A23187, benzylpenicillin, bumetamide, losartan, probenecid, phenol red, urate, glutarate and alpha-ketoglutarate. PAH uptake is inhibited by glutarate. The protein is Solute carrier family 22 member 6 (SLC22A6) of Pseudopleuronectes americanus (Winter flounder).